A 157-amino-acid polypeptide reads, in one-letter code: Protein Smg homolog (157 aa).

It belongs to the Smg family.

This Aliivibrio fischeri (strain ATCC 700601 / ES114) (Vibrio fischeri) protein is Protein Smg homolog.